A 299-amino-acid polypeptide reads, in one-letter code: Homeobox protein ceh-24 (299 aa).

Basic and acidic residues predominate over residues 1 to 35; the sequence is MSEKETPSPVLDVKKEKNEETGIDEEKSSEDDCSK. 2 disordered regions span residues 1 to 45 and 208 to 263; these read MSEK…NPSK and QEKE…SGVF. The homeobox DNA-binding region spans 150 to 209; that stretch reads RRKRRVLFSQAQVYELERRFKQAKYLTAPEREQLANSIRLTPTQVKIWFQNHRYKCKRQE. The segment covering 242–252 has biased composition (acidic residues); that stretch reads DDKDDEEEEES.

It belongs to the NK-2 homeobox family. In terms of tissue distribution, expressed in the 8 vulval muscles, 8-10 ventral neurons in the head and in the most posterior pharyngeal muscle cell, m8. Expressed in SIA, SIB and SMB sublateral motor neurons, and in muscles of the pharynx and vulva.

The protein localises to the nucleus. In terms of biological role, probable transcriptional regulator that is required in neural development for the normal formation of sublateral cholinergic motor neuron processes. Plays a role in regulating the expression of acetylcholine transporter protein unc-17 in the sublateral processes. In particular, it is required in sublateral motor neurons for a left-right turning behavior that occurs during the lethargus phase of the normal sleep process called 'flipping'. During 'flipping' animals rotate 180 degrees about their longitudinal axis. The polypeptide is Homeobox protein ceh-24 (Caenorhabditis elegans).